The following is a 220-amino-acid chain: Glycerol-3-phosphate acyltransferase (220 aa).

The next 6 membrane-spanning stretches (helical) occupy residues 11–31 (INVI…GYAL), 70–90 (LLIL…SKLF), 96–116 (LQWM…FLNF), 127–147 (GSVV…WFFV), 153–173 (ISSL…FFVP), and 193–213 (MVLI…NLLA).

Belongs to the PlsY family. Probably interacts with PlsX.

It localises to the cell inner membrane. The catalysed reaction is an acyl phosphate + sn-glycerol 3-phosphate = a 1-acyl-sn-glycero-3-phosphate + phosphate. Its pathway is lipid metabolism; phospholipid metabolism. Functionally, catalyzes the transfer of an acyl group from acyl-phosphate (acyl-PO(4)) to glycerol-3-phosphate (G3P) to form lysophosphatidic acid (LPA). This enzyme utilizes acyl-phosphate as fatty acyl donor, but not acyl-CoA or acyl-ACP. The protein is Glycerol-3-phosphate acyltransferase of Helicobacter acinonychis (strain Sheeba).